The primary structure comprises 320 residues: 1,5-anhydro-D-fructose reductase (320 aa).

Aspartate 35 contacts NADP(+). The Proton donor role is filled by tyrosine 40. Histidine 102 serves as a coordination point for substrate. Residues glutamine 194 and 265–277 (IPGS…IKEN) contribute to the NADP(+) site.

This sequence belongs to the aldo/keto reductase family. Monomer. In terms of tissue distribution, specifically expressed in testis. Expressed in testicular germ cells and testis interstitial cells.

The protein localises to the cytoplasm. The enzyme catalyses 1,5-anhydro-D-glucitol + NADP(+) = 1,5-anhydro-D-fructose + NADPH + H(+). Inhibited by p-chloromercuribenzoic acid and alkyliodines. Functionally, catalyzes the NADPH-dependent reduction of 1,5-anhydro-D-fructose (AF) to 1,5-anhydro-D-glucitol. Has low NADPH-dependent reductase activity towards 9,10-phenanthrenequinone (in vitro). This chain is 1,5-anhydro-D-fructose reductase (AKR1E2), found in Homo sapiens (Human).